Reading from the N-terminus, the 546-residue chain is CTP synthase (546 aa).

Residues 1–265 (MTKYIFVTGG…DDIIAEQLQL (265 aa)) are amidoligase domain. Ser-13 lines the CTP pocket. Ser-13 lines the UTP pocket. ATP contacts are provided by residues 14 to 19 (SLGKGI) and Asp-71. Residues Asp-71 and Glu-139 each contribute to the Mg(2+) site. Residues 146–148 (DIE), 186–191 (KTKPTQ), and Lys-222 contribute to the CTP site. UTP contacts are provided by residues 186-191 (KTKPTQ) and Lys-222. The Glutamine amidotransferase type-1 domain occupies 290–542 (KIAMVGKYVD…VKAALAHQAD (253 aa)). Gly-351 contributes to the L-glutamine binding site. The active-site Nucleophile; for glutamine hydrolysis is the Cys-378. L-glutamine contacts are provided by residues 379-382 (LGMQ), Glu-402, and Arg-469. Active-site residues include His-515 and Glu-517.

This sequence belongs to the CTP synthase family. Homotetramer.

It carries out the reaction UTP + L-glutamine + ATP + H2O = CTP + L-glutamate + ADP + phosphate + 2 H(+). The catalysed reaction is L-glutamine + H2O = L-glutamate + NH4(+). It catalyses the reaction UTP + NH4(+) + ATP = CTP + ADP + phosphate + 2 H(+). Its pathway is pyrimidine metabolism; CTP biosynthesis via de novo pathway; CTP from UDP: step 2/2. Allosterically activated by GTP, when glutamine is the substrate; GTP has no effect on the reaction when ammonia is the substrate. The allosteric effector GTP functions by stabilizing the protein conformation that binds the tetrahedral intermediate(s) formed during glutamine hydrolysis. Inhibited by the product CTP, via allosteric rather than competitive inhibition. Its function is as follows. Catalyzes the ATP-dependent amination of UTP to CTP with either L-glutamine or ammonia as the source of nitrogen. Regulates intracellular CTP levels through interactions with the four ribonucleotide triphosphates. The sequence is that of CTP synthase from Chromobacterium violaceum (strain ATCC 12472 / DSM 30191 / JCM 1249 / CCUG 213 / NBRC 12614 / NCIMB 9131 / NCTC 9757 / MK).